The primary structure comprises 320 residues: MLQTTPPDLLPGAADVREAVASWLTLLARERRFSPNTVEAYARDLRQFLAHRARAGTQPDIPSLVALKPRDLRAFMAARRAEGIGGRSLMRALASLRSFARHLEREGHGTVSALSAVRSPKVERRLPRPLPVAAAVALASPDIRAGEDRPDWVLARDAAVLALLYGAGLRIGEALGLRRKDAPVGGLDTLTIVGKGQKTRMVPVIAPVQAALAEYLAACPYALAPDGPLFVGQKGGPLSPRVVQLAVASLRGALGLPDSATPHALRHSFATHLLARQGDLRAIQDLLGHASLATTQIYTKVDSARLMSAFEAAHPRAGRM.

Residues 14–104 (ADVREAVASW…SLRSFARHLE (91 aa)) enclose the Core-binding (CB) domain. Residues 125 to 311 (RLPRPLPVAA…DSARLMSAFE (187 aa)) form the Tyr recombinase domain. Catalysis depends on residues arginine 170, lysine 195, histidine 263, arginine 266, and histidine 289. The active-site O-(3'-phospho-DNA)-tyrosine intermediate is tyrosine 298.

This sequence belongs to the 'phage' integrase family. XerC subfamily. As to quaternary structure, forms a cyclic heterotetrameric complex composed of two molecules of XerC and two molecules of XerD.

It is found in the cytoplasm. Its function is as follows. Site-specific tyrosine recombinase, which acts by catalyzing the cutting and rejoining of the recombining DNA molecules. The XerC-XerD complex is essential to convert dimers of the bacterial chromosome into monomers to permit their segregation at cell division. It also contributes to the segregational stability of plasmids. This is Tyrosine recombinase XerC from Methylobacterium sp. (strain 4-46).